The sequence spans 468 residues: Asparagine--tRNA ligase (468 aa).

The protein belongs to the class-II aminoacyl-tRNA synthetase family. Homodimer.

Its subcellular location is the cytoplasm. It carries out the reaction tRNA(Asn) + L-asparagine + ATP = L-asparaginyl-tRNA(Asn) + AMP + diphosphate + H(+). The protein is Asparagine--tRNA ligase of Parabacteroides distasonis (strain ATCC 8503 / DSM 20701 / CIP 104284 / JCM 5825 / NCTC 11152).